We begin with the raw amino-acid sequence, 290 residues long: MKPNSEEEEELVQGVGPWDECFEVAVQLALRAGQIIRKALTEEKHVSTKTSAADLVTETDHRVEDLIVSELRKRFPSHRFIAEEATASGAKCVLTHSPTWIIDPIDGTCNFVHRFPTVAVSIGFAVHQELEFGVIHHCTEERLYTGRRGQGAFCNGQRLQVSRETDLAKALVLTEIGPKRDPDTLKVFLSNMERLLHAKAHGVRVIGSSTLALCYLASGAADAYYQFGLHCWDLAAATVIIREAGGIVIDTSGGPLDLMSCRVVAAGTREMAVLIAQALQTINYGRDDEK.

Residues Glu83, Asp103, Ile105, and Asp106 each contribute to the Mg(2+) site. Glu83 contributes to the substrate binding site. Substrate is bound by residues 105 to 108 (IDGT), 207 to 209 (GSS), Gln226, and Asp233. Residue Asp233 coordinates Mg(2+).

The protein belongs to the inositol monophosphatase superfamily. Homodimer. The cofactor is Mg(2+).

Its subcellular location is the cytoplasm. The catalysed reaction is a myo-inositol phosphate + H2O = myo-inositol + phosphate. It participates in polyol metabolism; myo-inositol biosynthesis; myo-inositol from D-glucose 6-phosphate: step 2/2. In terms of biological role, can use myo-inositol monophosphates, scylloinositol 1,4-diphosphate, glucose-1-phosphate, beta-glycerophosphate, and 2'-AMP as substrates. Has been implicated as the pharmacological target for lithium Li(+) action in brain. In Rattus norvegicus (Rat), this protein is Inositol monophosphatase 2 (Impa2).